Consider the following 300-residue polypeptide: Sulfate adenylyltransferase subunit 2 (300 aa).

Residues 281–300 (RAIDRDEAGSMEKKKREGYF) form a disordered region.

The protein belongs to the PAPS reductase family. CysD subfamily. As to quaternary structure, heterodimer composed of CysD, the smaller subunit, and CysN.

It carries out the reaction sulfate + ATP + H(+) = adenosine 5'-phosphosulfate + diphosphate. The protein operates within sulfur metabolism; hydrogen sulfide biosynthesis; sulfite from sulfate: step 1/3. Functionally, with CysN forms the ATP sulfurylase (ATPS) that catalyzes the adenylation of sulfate producing adenosine 5'-phosphosulfate (APS) and diphosphate, the first enzymatic step in sulfur assimilation pathway. APS synthesis involves the formation of a high-energy phosphoric-sulfuric acid anhydride bond driven by GTP hydrolysis by CysN coupled to ATP hydrolysis by CysD. The sequence is that of Sulfate adenylyltransferase subunit 2 from Brucella canis (strain ATCC 23365 / NCTC 10854 / RM-666).